We begin with the raw amino-acid sequence, 92 residues long: Small ribosomal subunit protein uS19 (92 aa).

The protein belongs to the universal ribosomal protein uS19 family.

Functionally, protein S19 forms a complex with S13 that binds strongly to the 16S ribosomal RNA. The protein is Small ribosomal subunit protein uS19 of Listeria innocua serovar 6a (strain ATCC BAA-680 / CLIP 11262).